We begin with the raw amino-acid sequence, 311 residues long: Malate dehydrogenase (311 aa).

Residues 7 to 13 (GAAGGIG) and aspartate 34 contribute to the NAD(+) site. Substrate is bound by residues arginine 81 and arginine 87. NAD(+)-binding positions include asparagine 94 and 117–119 (ITN). Residues asparagine 119 and arginine 153 each contribute to the substrate site. Catalysis depends on histidine 177, which acts as the Proton acceptor. Residue methionine 227 coordinates NAD(+).

It belongs to the LDH/MDH superfamily. MDH type 1 family. As to quaternary structure, homodimer.

It catalyses the reaction (S)-malate + NAD(+) = oxaloacetate + NADH + H(+). Its function is as follows. Catalyzes the reversible oxidation of malate to oxaloacetate. This chain is Malate dehydrogenase, found in Erwinia tasmaniensis (strain DSM 17950 / CFBP 7177 / CIP 109463 / NCPPB 4357 / Et1/99).